Reading from the N-terminus, the 1469-residue chain is Accumulation-associated protein (1469 aa).

The N-terminal stretch at 1–52 (MGKRRQGPINKKVDFLPNKLNKYSIRKFTVGTASILLGSTLIFGSSSHEAKA) is a signal peptide. Disordered stretches follow at residues 52–164 (AAEE…SEPV), 486–511 (GIET…TPTT), and 528–1443 (EIKP…QANE). Composition is skewed to polar residues over residues 75 to 94 (ENTN…STLQ) and 110 to 125 (KANS…SEAP). The span at 129–144 (DLARKEDIPAVSKNEE) shows a compositional bias: basic and acidic residues. Polar residues predominate over residues 145-164 (LQSSQPNTDSKIEPTTSEPV). G5 domains lie at 446-528 (PKAV…GGEE), 574-656 (YGPV…GGEE), 702-784 (YGPV…GGEE), 830-912 (YGPV…GGEE), 958-1040 (YGPV…GGEE), 1086-1168 (YGPV…GGEQ), and 1211-1296 (VTKY…GPTK). Over residues 489-500 (TTTTPTYVNPNT) the composition is skewed to low complexity. Composition is skewed to basic and acidic residues over residues 528–537 (EIKPGHKDEF) and 589–613 (PFDK…KGEP). Over residues 614–629 (GTKTITTPTTKNPLTG) the composition is skewed to low complexity. Basic and acidic residues-rich tracts occupy residues 631 to 646 (KVGE…KQPV) and 655 to 665 (EEIKPGHKDEF). The span at 738–757 (KGEPGTKTITTPTTKNPLTG) shows a compositional bias: low complexity. Basic and acidic residues-rich tracts occupy residues 759-793 (KVGE…KDEF) and 845-869 (PFDK…KGEP). A compositionally biased stretch (low complexity) spans 870–885 (GTKTITTPTTKNPLTG). Over residues 887–921 (KVGEGEPTEKVTKQPVDEIVHYGGEEIKPGHKDEF) the composition is skewed to basic and acidic residues. The segment covering 994–1013 (KGEPGTKTITTPTTKNPLTG) has biased composition (low complexity). A compositionally biased stretch (basic and acidic residues) spans 1015-1049 (KVGEGEPTEKITKQPVDEIVHYGGEEIKPGHKDEF). Over residues 1122-1141 (KGEPGTKTITTPTTKNPLTG) the composition is skewed to low complexity. Basic and acidic residues-rich tracts occupy residues 1143 to 1162 (KVGE…DEIV), 1229 to 1253 (PFDK…KGEP), and 1271 to 1286 (KVGE…KQPV). The segment covering 1409 to 1443 (TPTQSGAPEQPNRSMHSTDNKNQLPDTGENRQANE) has biased composition (polar residues). Residues 1432–1436 (LPDTG) carry the LPXTG sorting signal motif. Thr1435 is subject to Pentaglycyl murein peptidoglycan amidated threonine. Residues 1436 to 1469 (GENRQANEGTLVGSLLAIVGSLFIFGRRKKGNEK) constitute a propeptide, removed by sortase.

It is found in the secreted. The protein resides in the cell wall. The sequence is that of Accumulation-associated protein from Staphylococcus epidermidis (strain ATCC 12228 / FDA PCI 1200).